We begin with the raw amino-acid sequence, 523 residues long: Probable malate:quinone oxidoreductase 1 (523 aa).

The protein belongs to the MQO family. Requires FAD as cofactor.

The catalysed reaction is (S)-malate + a quinone = a quinol + oxaloacetate. It functions in the pathway carbohydrate metabolism; tricarboxylic acid cycle; oxaloacetate from (S)-malate (quinone route): step 1/1. This Pseudomonas aeruginosa (strain ATCC 15692 / DSM 22644 / CIP 104116 / JCM 14847 / LMG 12228 / 1C / PRS 101 / PAO1) protein is Probable malate:quinone oxidoreductase 1.